The chain runs to 456 residues: Antigen Lp49 (456 aa).

The N-terminal stretch at 1–34 (MNSNPKKKFLKLIKIKSDIILLIPIFLFLVCCKS) is a signal peptide. Cys-346 and Cys-347 are joined by a disulfide.

Its subcellular location is the cell outer membrane. Functionally, may be involved in virulence. Binds human plasminogen (PLG) and stimulates its proteolytic cleavage to enzymatically active plasmin in the presence of an urokinase-type PLG activator in vitro. Activated plasmin has proteolytic activity which may help the bacteria to spread throughout the host by degrading extracellular matrix components, facilitating tissue penetration and invasion. The sequence is that of Antigen Lp49 from Leptospira interrogans serogroup Icterohaemorrhagiae serovar copenhageni (strain Fiocruz L1-130).